The primary structure comprises 276 residues: Proteasome subunit beta type-8 (276 aa).

A propeptide spans 1–72 (MALLDLCGAP…RKVQIEMAHG (72 aa)) (removed in mature form). Residue Thr73 is the Nucleophile of the active site.

This sequence belongs to the peptidase T1B family. The 26S proteasome consists of a 20S proteasome core and two 19S regulatory subunits. The 20S proteasome core is composed of 28 subunits that are arranged in four stacked rings, resulting in a barrel-shaped structure. The two end rings are each formed by seven alpha subunits, and the two central rings are each formed by seven beta subunits. The catalytic chamber with the active sites is on the inside of the barrel. Component of the immunoproteasome, where it displaces the equivalent housekeeping subunit PSMB5. Component of the spermatoproteasome, a form of the proteasome specifically found in testis. Directly interacts with POMP. Interacts with TAP1. Post-translationally, autocleaved. The resulting N-terminal Thr residue of the mature subunit is responsible for the nucleophile proteolytic activity.

The protein localises to the cytoplasm. It localises to the nucleus. It carries out the reaction Cleavage of peptide bonds with very broad specificity.. Functionally, the proteasome is a multicatalytic proteinase complex which is characterized by its ability to cleave peptides with Arg, Phe, Tyr, Leu, and Glu adjacent to the leaving group at neutral or slightly basic pH. The proteasome has an ATP-dependent proteolytic activity. This subunit is involved in antigen processing to generate class I binding peptides. May participate in the generation of spliced peptides resulting from the ligation of two separate proteasomal cleavage products that are not contiguous in the parental protein. Required for adipocyte differentiation. This is Proteasome subunit beta type-8 (Psmb8) from Rattus norvegicus (Rat).